An 819-amino-acid chain; its full sequence is Kinesin-like protein KIN-13A (819 aa).

Positions glutamate 150–serine 178 are disordered. In terms of domain architecture, Kinesin motor spans lysine 199–leucine 535. Glycine 289–threonine 296 contacts ATP. The interval serine 534–aspartate 729 is disordered. Residues threonine 550–serine 562 are compositionally biased toward low complexity. Composition is skewed to basic and acidic residues over residues glutamine 577 to alanine 589 and arginine 614 to aspartate 631. Over residues leucine 632–leucine 652 the composition is skewed to polar residues. Positions tyrosine 669 to glycine 686 are enriched in basic and acidic residues. Over residues glutamine 697–arginine 719 the composition is skewed to low complexity. A coiled-coil region spans residues leucine 736–valine 767.

The protein belongs to the TRAFAC class myosin-kinesin ATPase superfamily. Kinesin family. KIN-13 subfamily. Ubiquitous.

It localises to the microsome. The sequence is that of Kinesin-like protein KIN-13A from Oryza sativa subsp. japonica (Rice).